A 145-amino-acid polypeptide reads, in one-letter code: Putative antiporter subunit mnhG2 (145 aa).

Transmembrane regions (helical) follow at residues 11–31 (IAAV…IGIV), 51–71 (VLLT…FFSV), and 72–92 (RLLL…HLVA).

It belongs to the CPA3 antiporters (TC 2.A.63) subunit G family. As to quaternary structure, may form a heterooligomeric complex that consists of seven subunits: mnhA2, mnhB2, mnhC2, mnhD2, mnhE2, mnhF2 and mnhG2.

The protein localises to the cell membrane. The sequence is that of Putative antiporter subunit mnhG2 (mnhG2) from Staphylococcus aureus (strain COL).